The chain runs to 48 residues: Toxin CSTX-15 (48 aa).

Intrachain disulfides connect cysteine 3-cysteine 18, cysteine 10-cysteine 27, cysteine 17-cysteine 42, and cysteine 29-cysteine 40.

The protein belongs to the neurotoxin 19 (CSTX) family. 12 subfamily. Heterodimer of A and B chains; disulfide-linked. Contains 4 disulfide bonds. As to expression, expressed by the venom gland.

The protein resides in the secreted. This Cupiennius salei (American wandering spider) protein is Toxin CSTX-15.